The sequence spans 30 residues: Trypsin inhibitor 7 (30 aa).

3 disulfide bridges follow: cysteine 4–cysteine 21, cysteine 11–cysteine 23, and cysteine 17–cysteine 29.

Belongs to the protease inhibitor I7 (squash-type serine protease inhibitor) family.

The protein resides in the secreted. Functionally, strongly inhibits trypsin, weakly inhibits chymotrypsin. This is Trypsin inhibitor 7 from Cyclanthera pedata (Achocha).